An 819-amino-acid chain; its full sequence is NEDD4-binding protein 1 (819 aa).

Positions 1 to 13 are enriched in polar residues; the sequence is MASGSVQSSSGNG. Residues 1–20 form a disordered region; it reads MASGSVQSSSGNGRRQAAVV. Positions 80 to 164 constitute a KH-like domain; that stretch reads KQAVRRAKEY…VQQFIALFKD (85 aa). The segment covering 226–241 has biased composition (basic and acidic residues); it reads DDKAECKVNQKDEVSR. Disordered regions lie at residues 226–247 and 666–736; these read DDKA…AGTP and KLDD…MAPR. Positions 517–669 constitute an RNase NYN domain; the sequence is LKHIIIDGSN…LGRYGPKLDD (153 aa). The segment covering 673–689 has biased composition (polar residues); sequence KQPNNRTVHSSFPSSNE. Residues 772 to 819 are coCUN; sequence RSPSETMQLKEALLKIFPEADQRHKINEILTAHPFMRDLNALSAMVLD.

Belongs to the N4BP1 family.

Its subcellular location is the cytoplasm. The protein localises to the cytosol. It localises to the nucleus. The protein resides in the nucleolus. It is found in the PML body. In terms of biological role, potent suppressor of cytokine production that acts as a regulator of innate immune signaling and inflammation. Acts as a key negative regulator of select cytokine and chemokine responses elicited by TRIF-independent Toll-like receptors (TLRs), thereby limiting inflammatory cytokine responses to minor insults. Has ribonuclease activity. This Xenopus tropicalis (Western clawed frog) protein is NEDD4-binding protein 1.